A 103-amino-acid chain; its full sequence is Small ribosomal subunit protein uS10 (103 aa).

Belongs to the universal ribosomal protein uS10 family. As to quaternary structure, part of the 30S ribosomal subunit.

In terms of biological role, involved in the binding of tRNA to the ribosomes. The chain is Small ribosomal subunit protein uS10 from Verminephrobacter eiseniae (strain EF01-2).